A 321-amino-acid polypeptide reads, in one-letter code: Glucokinase (321 aa).

Residue 8 to 13 (GDVGGT) participates in ATP binding.

The protein belongs to the bacterial glucokinase family.

The protein localises to the cytoplasm. It carries out the reaction D-glucose + ATP = D-glucose 6-phosphate + ADP + H(+). The polypeptide is Glucokinase (Enterobacter sp. (strain 638)).